Consider the following 352-residue polypeptide: Photosystem II D2 protein (352 aa).

Residues C40 to T60 form a helical membrane-spanning segment. H117 serves as a coordination point for chlorophyll a. Residues G124 to P140 form a helical membrane-spanning segment. Residues Q129 and N142 each contribute to the pheophytin a site. A helical transmembrane segment spans residues V152–S165. Position 197 (H197) interacts with chlorophyll a. The chain crosses the membrane as a helical span at residues G207–E227. Residues H214 and F261 each contribute to the a plastoquinone site. Fe cation is bound at residue H214. H268 is a binding site for Fe cation. A helical transmembrane segment spans residues G278–R294.

This sequence belongs to the reaction center PufL/M/PsbA/D family. As to quaternary structure, PSII is composed of 1 copy each of membrane proteins PsbA, PsbB, PsbC, PsbD, PsbE, PsbF, PsbH, PsbI, PsbJ, PsbK, PsbL, PsbM, PsbT, PsbX, PsbY, PsbZ, Psb30/Ycf12, peripheral proteins PsbO, CyanoQ (PsbQ), PsbU, PsbV and a large number of cofactors. It forms dimeric complexes. The cofactor is The D1/D2 heterodimer binds P680, chlorophylls that are the primary electron donor of PSII, and subsequent electron acceptors. It shares a non-heme iron and each subunit binds pheophytin, quinone, additional chlorophylls, carotenoids and lipids. There is also a Cl(-1) ion associated with D1 and D2, which is required for oxygen evolution. The PSII complex binds additional chlorophylls, carotenoids and specific lipids..

The protein resides in the cellular thylakoid membrane. The catalysed reaction is 2 a plastoquinone + 4 hnu + 2 H2O = 2 a plastoquinol + O2. In terms of biological role, photosystem II (PSII) is a light-driven water:plastoquinone oxidoreductase that uses light energy to abstract electrons from H(2)O, generating O(2) and a proton gradient subsequently used for ATP formation. It consists of a core antenna complex that captures photons, and an electron transfer chain that converts photonic excitation into a charge separation. The D1/D2 (PsbA/PsbD) reaction center heterodimer binds P680, the primary electron donor of PSII as well as several subsequent electron acceptors. D2 is needed for assembly of a stable PSII complex. The chain is Photosystem II D2 protein from Trichodesmium erythraeum (strain IMS101).